The sequence spans 319 residues: Ribonucleoside-diphosphate reductase small chain (319 aa).

Residues D70, E101, and H104 each contribute to the Fe cation site. Residue Y108 is part of the active site. Residues E163, E197, and H200 each contribute to the Fe cation site. Residues 313–319 (FSLDVDF) form an interaction with R1 region.

This sequence belongs to the ribonucleoside diphosphate reductase small chain family. In terms of assembly, interacts with RNR1/OPG080 subunit. Can interact with host RNR1 supunit. Requires Fe cation as cofactor.

It carries out the reaction a 2'-deoxyribonucleoside 5'-diphosphate + [thioredoxin]-disulfide + H2O = a ribonucleoside 5'-diphosphate + [thioredoxin]-dithiol. Functionally, ribonucleoside-diphosphate reductase holoenzyme provides the precursors necessary for viral DNA synthesis. Allows virus growth in non-dividing cells. Catalyzes the biosynthesis of deoxyribonucleotides from the corresponding ribonucleotides. This Vaccinia virus (strain Copenhagen) (VACV) protein is Ribonucleoside-diphosphate reductase small chain (OPG048).